Here is a 1542-residue protein sequence, read N- to C-terminus: Pleiotropic ABC efflux transporter of multiple drugs PDH1 (1542 aa).

Low complexity predominate over residues 1 to 14; that stretch reads MNTPDDSSVSSVDS. The disordered stretch occupies residues 1–61; sequence MNTPDDSSVS…APADGSAPLD (61 aa). Residues 1-517 are Cytoplasmic-facing; the sequence is MNTPDDSSVS…LIRNFWRIKN (517 aa). The span at 24-33 shows a compositional bias: basic and acidic residues; the sequence is NVEKRIRELA. Polar residues predominate over residues 35–47; that stretch reads SLTQQSLTSSNRS. Residues 153–409 enclose the ABC transporter 1 domain; sequence VKLLNAVWRK…FQKMGYFCPK (257 aa). The next 6 helical transmembrane spans lie at 518-540, 552-574, 603-625, 634-652, 662-684, and 773-792; these read SASVTLFQVFGNSAMAFILGSMF, FYFRGAAMFFAILFNAFSSLLEI, VISEIPPKIVTAILFNIIFYFLV, FFFYFLINVIAVFAMSHLF, LQEAMVPASMLLLALSMYTGFAI, and GFGVGMAYVIFFFFVYLILC. Over 793–1220 the chain is Cytoplasmic; it reads EFNEGAKQKG…LFQQYWRTPD (428 aa). The span at 825-834 shows a compositional bias: basic and acidic residues; it reads TKMHTDKNDI. The segment at 825-846 is disordered; the sequence is TKMHTDKNDIENNSESITSNAT. Residues 835–846 are compositionally biased toward polar residues; that stretch reads ENNSESITSNAT. One can recognise an ABC transporter 2 domain in the interval 885–1128; it reads FHWQNLCYDV…MIKYFEDHGA (244 aa). 921-928 is an ATP binding site; it reads GASGAGKT. The next 6 membrane-spanning stretches (helical) occupy residues 1221 to 1241, 1256 to 1276, 1296 to 1316, 1342 to 1362, 1370 to 1390, and 1495 to 1515; these read YLWSKYILTIFNQLFIGFTFF, SIFMYTVIFNPLLQQYLPTFV, AFILAQIVVEVPWNIVAGTLA, LFWLFSIAFYVYVGSLGLFVI, TAAHIGSLMFTMALSFCGVMA, and GIFICFIVFDYVAGIFLYWLA. At 1516–1542 the chain is on the cytoplasmic side; the sequence is RVPKTNGKIAKNGKTAKVNFIRRLIPF.

This sequence belongs to the ABC transporter superfamily. ABCG family. PDR (TC 3.A.1.205) subfamily. Post-translationally, phosphorylated by PKA. Dephosphorylated on glucose depletion and independently rephosphorylated during glucose exposure or under stress.

It localises to the cell membrane. Pleiotropic ABC efflux transporter that confers resistance to structurally and functionally unrelated compounds including caspofungin or azoles such as fluconazole, itraconazole, posaconazole, voriconazole, and isavuconazole. Does not play a role in the azole resistance in mature biofilms. The polypeptide is Pleiotropic ABC efflux transporter of multiple drugs PDH1 (Candida glabrata (strain ATCC 2001 / BCRC 20586 / JCM 3761 / NBRC 0622 / NRRL Y-65 / CBS 138) (Yeast)).